We begin with the raw amino-acid sequence, 137 residues long: Small ribosomal subunit protein uS11 (137 aa).

Positions 1 to 25 (MADRRRGAARGGAARPRRRERKNIP) are disordered. The segment covering 15 to 25 (RPRRRERKNIP) has biased composition (basic residues).

Belongs to the universal ribosomal protein uS11 family. Part of the 30S ribosomal subunit. Interacts with proteins S7 and S18. Binds to IF-3.

In terms of biological role, located on the platform of the 30S subunit, it bridges several disparate RNA helices of the 16S rRNA. Forms part of the Shine-Dalgarno cleft in the 70S ribosome. This Thermomicrobium roseum (strain ATCC 27502 / DSM 5159 / P-2) protein is Small ribosomal subunit protein uS11.